The chain runs to 453 residues: Exodeoxyribonuclease 7 large subunit (453 aa).

It belongs to the XseA family. Heterooligomer composed of large and small subunits.

Its subcellular location is the cytoplasm. The catalysed reaction is Exonucleolytic cleavage in either 5'- to 3'- or 3'- to 5'-direction to yield nucleoside 5'-phosphates.. Its function is as follows. Bidirectionally degrades single-stranded DNA into large acid-insoluble oligonucleotides, which are then degraded further into small acid-soluble oligonucleotides. The sequence is that of Exodeoxyribonuclease 7 large subunit from Rickettsia typhi (strain ATCC VR-144 / Wilmington).